Reading from the N-terminus, the 866-residue chain is MGAARSPPSAVPGPLLGLLLLLLGVLAPGGASLRLLDHRALVCSQPGLNCTVKNSTCLDDSWIHPRNLTPSSPKDLQIQLHFAHTQQGDLFPVAHIEWTLQTDASILYLEGAELSVLQLNTNERLCVRFEFLSKLRHHHRRWRFTFSHFVVDPDQEYEVTVHHLPKPIPDGDPNHQSKNFLVPDCEHARMKVTTPCMSSGSLWDPNITVETLEAHQLRVSFTLWNESTHYQILLTSFPHMENHSCFEHMHHIPAPRPEEFHQRSNVTLTLRNLKGCCRHQVQIQPFFSSCLNDCLRHSATVSCPEMPDTPEPIPDYMPLWVYWFITGISILLVGSVILLIVCMTWRLAGPGSEKYSDDTKYTDGLPAADLIPPPLKPRKVWIIYSADHPLYVDVVLKFAQFLLTACGTEVALDLLEEQAISEAGVMTWVGRQKQEMVESNSKIIVLCSRGTRAKWQALLGRGAPVRLRCDHGKPVGDLFTAAMNMILPDFKRPACFGTYVVCYFSEVSCDGDVPDLFGAAPRYPLMDRFEEVYFRIQDLEMFQPGRMHRVGELSGDNYLRSPGGRQLRAALDRFRDWQVRCPDWFECENLYSADDQDAPSLDEEVFEEPLLPPGTGIVKRAPLVREPGSQACLAIDPLVGEEGGAAVAKLEPHLQPRGQPAPQPLHTLVLAAEEGALVAAVEPGPLADGAAVRLALAGEGEACPLLGSPGAGRNSVLFLPVDPEDSPLGSSTPMASPDLLPEDVREHLEGLMLSLFEQSLSCQAQGGCSRPAMVLTDPHTPYEEEQRQSVQSDQGYISRSSPQPPEGLTEMEEEEEEEQDPGKPALPLSPEDLESLRSLQRQLLFRQLQKNSGWDTMGSESEGPSA.

The first 32 residues, 1 to 32, serve as a signal peptide directing secretion; the sequence is MGAARSPPSAVPGPLLGLLLLLLGVLAPGGAS. The Extracellular portion of the chain corresponds to 33-320; that stretch reads LRLLDHRALV…EPIPDYMPLW (288 aa). Cysteines 43 and 50 form a disulfide. N-linked (GlcNAc...) asparagine glycans are attached at residues N49, N54, and N67. 2 cysteine pairs are disulfide-bonded: C57-C126 and C185-C196. N-linked (GlcNAc...) asparagine glycans are attached at residues N206, N225, N242, and N265. Cystine bridges form between C245–C276, C277–C303, and C290–C294. A helical membrane pass occupies residues 321 to 341; sequence VYWFITGISILLVGSVILLIV. The Cytoplasmic portion of the chain corresponds to 342–866; the sequence is CMTWRLAGPG…MGSESEGPSA (525 aa). Positions 377–534 constitute an SEFIR domain; the sequence is PRKVWIIYSA…LMDRFEEVYF (158 aa). Phosphoserine is present on residues S708 and S736. Disordered stretches follow at residues 717 to 736 and 773 to 840; these read LFLPVDPEDSPLGSSTPMAS and MVLT…RSLQ. Positions 788-801 are enriched in polar residues; it reads QSVQSDQGYISRSS. Over residues 809-819 the composition is skewed to acidic residues; it reads TEMEEEEEEEQ.

As to quaternary structure, forms heterodimers with IL17RC; the heterodimer binds IL17A and IL17F homodimers as well as the heterodimer formed by IL17A and IL17F. Forms complexes with 2:1 binding stoichiometry: two receptor chains for one interleukin molecule. IL17A homodimer preferentially drives the formation of IL17RA-IL17RC heterodimeric receptor complex, whereas IL17F homodimer forms predominantly complexes with IL17RC homodimer. IL17A homodimer adopts an asymmetrical ternary structure with one IL17RA molecule, allowing for high affinity interactions of one IL17A monomer with one IL17RA molecule (via D1 and D2 domains), while disfavoring binding of a second IL17RA molecule on the other IL17A monomer. IL17A-IL17F forms complexes with IL17RA-IL17RC, but with lower affinity when compared to IL17A homodimer. IL17RA chain cannot distinguish between IL17A and IL17F molecules, potentially enabling the formation of topologically distinct complexes. Interacts with TRAF3IP2. Forms heterodimers with IL17RE; the heterodimer binds IL17C. (Microbial infection) Interacts with SARS coronavirus-2/SARS-CoV-2 virus protein ORF8. Glycosylated. Widely expressed.

It is found in the cell membrane. The protein resides in the secreted. Functionally, receptor for IL17A and IL17F, major effector cytokines of innate and adaptive immune system involved in antimicrobial host defense and maintenance of tissue integrity. Receptor for IL17A. Receptor for IL17F. Binds to IL17A with higher affinity than to IL17F. Binds IL17A and IL17F homodimers as part of a heterodimeric complex with IL17RC. Also binds heterodimers formed by IL17A and IL17F as part of a heterodimeric complex with IL17RC. Cytokine binding triggers homotypic interaction of IL17RA and IL17RC chains with TRAF3IP2 adapter, leading to TRAF6-mediated activation of NF-kappa-B and MAPkinase pathways, ultimately resulting in transcriptional activation of cytokines, chemokines, antimicrobial peptides and matrix metalloproteinases, with potential strong immune inflammation. Involved in antimicrobial host defense primarily promoting neutrophil activation and recruitment at infection sites to destroy extracellular bacteria and fungi. In secondary lymphoid organs, contributes to germinal center formation by regulating the chemotactic response of B cells to CXCL12 and CXCL13, enhancing retention of B cells within the germinal centers, B cell somatic hypermutation rate and selection toward plasma cells. Plays a role in the maintenance of the integrity of epithelial barriers during homeostasis and pathogen infection. Stimulates the production of antimicrobial beta-defensins DEFB1, DEFB103A, and DEFB104A by mucosal epithelial cells, limiting the entry of microbes through the epithelial barriers. Involved in antiviral host defense through various mechanisms. Enhances immunity against West Nile virus by promoting T cell cytotoxicity. Contributes to Influenza virus clearance by driving the differentiation of B-1a B cells, providing for production of virus-specific IgM antibodies at first line of host defense. Receptor for IL17C as part of a heterodimeric complex with IL17RE. Its function is as follows. (Microbial infection) Receptor for SARS coronavirus-2/SARS-CoV-2 virus protein ORF8, leading to IL17 pathway activation and an increased secretion of pro-inflammatory factors through activating NF-kappa-B signaling pathway. The chain is Interleukin-17 receptor A from Homo sapiens (Human).